Reading from the N-terminus, the 116-residue chain is Hydrogenase maturation factor HypA (116 aa).

Residue histidine 2 coordinates Ni(2+). Positions 73, 76, 90, and 93 each coordinate Zn(2+).

The protein belongs to the HypA/HybF family.

Involved in the maturation of [NiFe] hydrogenases. Required for nickel insertion into the metal center of the hydrogenase. This Escherichia coli O157:H7 protein is Hydrogenase maturation factor HypA.